The sequence spans 75 residues: Protein Tlp homolog (75 aa).

Residues Lys-48–Met-75 form a disordered region.

This sequence belongs to the Tlp family.

The chain is Protein Tlp homolog from Clostridium botulinum (strain 657 / Type Ba4).